Here is a 333-residue protein sequence, read N- to C-terminus: Glycerol-3-phosphate dehydrogenase [NAD(P)+] (333 aa).

2 residues coordinate NADPH: tryptophan 15 and lysine 108. The sn-glycerol 3-phosphate site is built by lysine 108, glycine 136, and serine 138. Alanine 140 is an NADPH binding site. Residues lysine 191, aspartate 244, serine 254, arginine 255, and asparagine 256 each coordinate sn-glycerol 3-phosphate. Lysine 191 serves as the catalytic Proton acceptor. Arginine 255 is a binding site for NADPH. NADPH is bound by residues valine 279 and glutamate 281.

Belongs to the NAD-dependent glycerol-3-phosphate dehydrogenase family.

It localises to the cytoplasm. It catalyses the reaction sn-glycerol 3-phosphate + NAD(+) = dihydroxyacetone phosphate + NADH + H(+). The enzyme catalyses sn-glycerol 3-phosphate + NADP(+) = dihydroxyacetone phosphate + NADPH + H(+). It participates in membrane lipid metabolism; glycerophospholipid metabolism. In terms of biological role, catalyzes the reduction of the glycolytic intermediate dihydroxyacetone phosphate (DHAP) to sn-glycerol 3-phosphate (G3P), the key precursor for phospholipid synthesis. In Maricaulis maris (strain MCS10) (Caulobacter maris), this protein is Glycerol-3-phosphate dehydrogenase [NAD(P)+].